The following is a 278-amino-acid chain: HTH-type transcriptional regulator TsaQ1/TsaQ2 (278 aa).

One can recognise an HTH iclR-type domain in the interval V19–A80. A DNA-binding region (H-T-H motif) is located at residues N40–S59. Positions L95–A266 constitute an IclR-ED domain.

Its function is as follows. Both copies function as additional regulators for the tsa locus, specifically for tsaT. The chain is HTH-type transcriptional regulator TsaQ1/TsaQ2 (tsaQ1) from Comamonas testosteroni (Pseudomonas testosteroni).